The chain runs to 224 residues: Large ribosomal subunit protein bL25 (224 aa).

Residues E190 to K224 form a disordered region.

It belongs to the bacterial ribosomal protein bL25 family. CTC subfamily. Part of the 50S ribosomal subunit; part of the 5S rRNA/L5/L18/L25 subcomplex. Contacts the 5S rRNA. Binds to the 5S rRNA independently of L5 and L18.

Functionally, this is one of the proteins that binds to the 5S RNA in the ribosome where it forms part of the central protuberance. The protein is Large ribosomal subunit protein bL25 of Variovorax paradoxus (strain S110).